The chain runs to 207 residues: Thymidylate kinase (207 aa).

Position 7–14 (7–14 (GCEGTGKT)) interacts with ATP.

Belongs to the thymidylate kinase family.

The enzyme catalyses dTMP + ATP = dTDP + ADP. Functionally, phosphorylation of dTMP to form dTDP in both de novo and salvage pathways of dTTP synthesis. The protein is Thymidylate kinase of Onion yellows phytoplasma (strain OY-M).